Here is a 457-residue protein sequence, read N- to C-terminus: Putative F-box protein At3g58860 (457 aa).

In terms of domain architecture, F-box spans 6–54 (MDLFSKLPDEVISHILSSLPTKEAASTSVLAKKWRYLFAFVPSLDFNDS).

This Arabidopsis thaliana (Mouse-ear cress) protein is Putative F-box protein At3g58860.